The sequence spans 228 residues: Leucine rich adaptor protein 1-like (228 aa).

M1 bears the N-acetylmethionine mark. The disordered stretch occupies residues 1-89 (MEDSPLPDLR…GSPRGSHSSA (89 aa)). Basic and acidic residues-rich tracts occupy residues 8–21 (DLRDIELKLGRKVP) and 28–42 (LRGEEPVPRERDRDP). Positions 44–56 (GGSGGGGGGGGGC) are enriched in gly residues. Positions 57-88 (SSSSSYCSFPPSLSSSSSSSPTSGSPRGSHSS) are enriched in low complexity.

This chain is Leucine rich adaptor protein 1-like (LURAP1L), found in Homo sapiens (Human).